The primary structure comprises 82 residues: RNA-binding protein BH0128 (82 aa).

The protein belongs to the eukaryotic ribosomal protein eL8 family.

This is RNA-binding protein BH0128 from Halalkalibacterium halodurans (strain ATCC BAA-125 / DSM 18197 / FERM 7344 / JCM 9153 / C-125) (Bacillus halodurans).